Reading from the N-terminus, the 124-residue chain is MSDIESIVEKLSSLTLIQAAELSKRLEEEWGVSASAPVAAVAPAVXXDVAVAEKTEFEVFLESFDAKSKISVIKEVRSITDLGLKEAKELVEALLKSLRTGVSKDEANELKKKLEAAGATISLR.

This sequence belongs to the bacterial ribosomal protein bL12 family. Homodimer. Part of the ribosomal stalk of the 50S ribosomal subunit. Forms a multimeric L10(L12)X complex, where L10 forms an elongated spine to which 2 to 4 L12 dimers bind in a sequential fashion. Binds GTP-bound translation factors.

Its function is as follows. Forms part of the ribosomal stalk which helps the ribosome interact with GTP-bound translation factors. Is thus essential for accurate translation. The protein is Large ribosomal subunit protein bL12 of Liberibacter africanus subsp. capensis.